Reading from the N-terminus, the 651-residue chain is MLRVQMTDGHTSCTAVEFSYISKISLNTPPGTKVKLSGTVDIKNGFLLLSDSNTTVLGGEVEHLIDKWALQRSLLKHNRSNIGAEGGPPPFLPFGQKCASTVQVDSRELDRRKTLQVSLPAKPTNDNDEFEKQRTAAIAEVAKSKETKTFGGGGGGVRSHLNIGAGGHRNREVSQKEKASKSESKNEGVYRELVDEKALKHITEMGFSKEASRQALMDNANNLEAALNVLLNSSKQKPVVGPPPRGRGKGRGRVRSEDEEDLGNARPSAPSTLFDFLESKMGTLNMEEPRSQPQHLYQGQHRVSNTEQNGIKDGNQSRHLPRNDPRQPRNEKPPRFQRDTPNLKSALENSVLSRNRGSERPSSSSGSDVWAEERIKCDRPYSRYDRTKDASYPLGFQHNDGAFKRRDNSMQNRSGRGPLYAEAKENPHPSEFVDYNNQKRGKRENQTSNPDHFYDRKSRTMNSEAFSGLKIEKHFSANTDYQNPVQSNSFVGVPNGETDMPMKGRRVGPIKPAGPVTAVPYDDKIFYNSGPKRRSGPIKPEKVIESSIPVEYAKMWKPGDECFALYWEDNKFYRAEVEALHSSGMTAVVKFTDYGNYEEVLLSNIKPVQTEAWEEEGTYDHTIEFRRGGDGQPRRSTRPTQQFYQPPRARN.

Positions 147–189 are disordered; that stretch reads TKTFGGGGGGVRSHLNIGAGGHRNREVSQKEKASKSESKNEGV. The span at 169–189 shows a compositional bias: basic and acidic residues; the sequence is RNREVSQKEKASKSESKNEGV. The UBA domain occupies 193 to 233; it reads LVDEKALKHITEMGFSKEASRQALMDNANNLEAALNVLLNS. Disordered stretches follow at residues 234–272, 306–371, and 384–459; these read SKQK…APST, TEQN…DVWA, and YDRT…RKSR. Ser-256 is modified (phosphoserine). Over residues 321–338 the composition is skewed to basic and acidic residues; sequence PRNDPRQPRNEKPPRFQR. Positions 339-352 are enriched in polar residues; that stretch reads DTPNLKSALENSVL. Residue Ser-345 is modified to Phosphoserine. Lys-470 is covalently cross-linked (Glycyl lysine isopeptide (Lys-Gly) (interchain with G-Cter in SUMO2)). One can recognise a Tudor domain in the interval 555-615; that stretch reads MWKPGDECFA…KPVQTEAWEE (61 aa). Residues 624–633 show a composition bias toward basic and acidic residues; it reads EFRRGGDGQP. The disordered stretch occupies residues 624 to 651; that stretch reads EFRRGGDGQPRRSTRPTQQFYQPPRARN. An EBM motif; may mediate interaction with the EJC region spans residues 631–651; that stretch reads GQPRRSTRPTQQFYQPPRARN.

As to quaternary structure, component of mRNA stress granules. Interacts with FMR1, FXR1, FXR2, EWSR1, FUS, SERBP1, EEF1A1 and DDX3X or DDX3Y, and with the small nuclear ribonucleoprotein-associated proteins SNRPB and SNRPN. Interacts with 'Lys-48'-linked tetra-ubiquitin, but not with monoubiquitin or 'Lys-63'-linked ubiquitin chains. May interact with the exon junction complex (EJC) composed at least of CASC3, EIF4A3, MAGOH and RBM8A. Interacts with POLR2A (via the C-terminal domain (CTD)).

It is found in the cytoplasm. It localises to the nucleus. Scaffolding protein that specifically recognizes and binds dimethylarginine-containing proteins. Plays a role in the regulation of translation of target mRNAs by binding Arg/Gly-rich motifs (GAR) in dimethylarginine-containing proteins. In nucleus, acts as a coactivator: recognizes and binds asymmetric dimethylation on the core histone tails associated with transcriptional activation (H3R17me2a and H4R3me2a) and recruits proteins at these arginine-methylated loci. In cytoplasm, acts as an antiviral factor that participates in the assembly of stress granules together with G3BP1. This Rattus norvegicus (Rat) protein is Tudor domain-containing protein 3 (Tdrd3).